The primary structure comprises 536 residues: MEMFGVHNPAIELATVGLGGAASVRYNFSAAALYEEAIRRGEAELTAQGALRAITGQHTGRSPRDKFVVRDINTDGEIWWDNNKPISPEHFAVLRDDMLAHAAGKELFVQDLVGGAEEGHALPTRVVTEFAWHSLFIRNLLIRPDTAALSSFVPKLTIIDLPSFKADPARHGCRSETVIACDLTNGLVLIGGTSYAGEMKKSVFTVLNYLLPAKGVMPMHCSANVGPDGDAAVFFGLSGTGKTTLSADPARTLIGDDEHGWSENGIFNFEGGCYAKTIRLSAEAEPEIYATTQRFGTVLENVVLNESREPDFNDGSLTENTRCAYPMDFIPNASKTGRAGHPKTIIMLTADAFGVMPPIARLTPDQAMYHFLSGYTAKVAGTEKGVVEPEATFSTCFGAPFMPRHPAEYGNLLKELIGRHGVQCWLVNTGWTGGAYGTGKRMPIKATRALLAAALSGELGQVEFRADTNFGFAVPVSVHGVDGSILDPRSTWADKAAYDAQAEKLVSMFIANFAKFENHVDGGVRDAAPGVKVAAE.

Substrate is bound by residues Arg61, Tyr195, and Lys201. ATP is bound by residues Lys201, His220, and 236-244; that span reads GLSGTGKTT. Residues Lys201 and His220 each contribute to the Mn(2+) site. Asp257 contacts Mn(2+). The ATP site is built by Glu285, Arg322, and Thr447. Substrate is bound at residue Arg322.

Belongs to the phosphoenolpyruvate carboxykinase (ATP) family. Mn(2+) is required as a cofactor.

The protein localises to the cytoplasm. The enzyme catalyses oxaloacetate + ATP = phosphoenolpyruvate + ADP + CO2. It participates in carbohydrate biosynthesis; gluconeogenesis. Functionally, involved in the gluconeogenesis. Catalyzes the conversion of oxaloacetate (OAA) to phosphoenolpyruvate (PEP) through direct phosphoryl transfer between the nucleoside triphosphate and OAA. The protein is Phosphoenolpyruvate carboxykinase (ATP) of Rhizobium johnstonii (strain DSM 114642 / LMG 32736 / 3841) (Rhizobium leguminosarum bv. viciae).